Here is a 639-residue protein sequence, read N- to C-terminus: Chaperone protein HtpG (639 aa).

The a; substrate-binding stretch occupies residues Met-1–Arg-347. The interval Glu-348–Lys-564 is b. The tract at residues Leu-565–Lys-639 is c.

Belongs to the heat shock protein 90 family. Homodimer.

The protein localises to the cytoplasm. Its function is as follows. Molecular chaperone. Has ATPase activity. The chain is Chaperone protein HtpG from Shewanella halifaxensis (strain HAW-EB4).